Consider the following 524-residue polypeptide: Beta-glucosidase 23 (524 aa).

An N-terminal signal peptide occupies residues 1-24 (MVLQKLPLIGLLLLLTIVASPANA). Gln-54 is an a beta-D-glucoside binding site. The N-linked (GlcNAc...) asparagine glycan is linked to Asn-60. Residues His-157 and 202-203 (NE) contribute to the a beta-D-glucoside site. Catalysis depends on Glu-203, which acts as the Proton donor. Cys-222 and Cys-230 are joined by a disulfide. A beta-D-glucoside-binding residues include Tyr-346 and Glu-418. Glu-418 (nucleophile) is an active-site residue. N-linked (GlcNAc...) asparagine glycosylation is present at Asn-461. Residues Trp-468, 475–476 (EW), and Phe-484 each bind a beta-D-glucoside. A glycan (N-linked (GlcNAc...) asparagine) is linked at Asn-494. The Prevents secretion from ER signature appears at 521 to 524 (KDEL).

This sequence belongs to the glycosyl hydrolase 1 family. In terms of assembly, homodimers. Binds to the deubiquitinating enzyme AMSH3. The inactive form interacts with PBP1/JAL30 to form the PYK10 complex, at least composed of PYK10/BGLU23, BGLU21, BGLU22, JAL22, JAL23, PBP1/JAL30, PBP2/JAL31, JAL32, JAL33, JAL34, JAL35, GLL22 and GLL23. Post-translationally, forms interchain disulfide bonds. Expressed exclusively in roots.

It localises to the endoplasmic reticulum lumen. It catalyses the reaction Hydrolysis of terminal, non-reducing beta-D-glucosyl residues with release of beta-D-glucose.. With respect to regulation, activated by tissue damage and upon binding to PBP1 or PBP2. Functionally, beta-D-glucosidase active on scopolin &gt; esculin &gt;&gt; 4-MU-glucoside &gt;&gt; DIMBOA-glucoside. No activity with pNP-glucoside, oNP-glucoside and sinigrin as substrates. May possess beta-D-fucosidase activity. Required for the beneficial interaction with the endophytic fungus P.indica. May participate in the control of root colonization by P.indica by repressing defense responses and modulating other responses required for a mutualistic interaction. In Arabidopsis thaliana (Mouse-ear cress), this protein is Beta-glucosidase 23.